Consider the following 287-residue polypeptide: Large ribosomal subunit protein uL2 (287 aa).

Disordered regions lie at residues 1–30 (MGIR…DQPE) and 211–287 (NRWK…GRQS). Polar residues predominate over residues 12 to 22 (GTRQKSVSDFS). Composition is skewed to basic residues over residues 211 to 220 (NRWKGRRPKV) and 258 to 287 (KTRK…GRQS).

The protein belongs to the universal ribosomal protein uL2 family. As to quaternary structure, part of the 50S ribosomal subunit. Forms a bridge to the 30S subunit in the 70S ribosome.

Functionally, one of the primary rRNA binding proteins. Required for association of the 30S and 50S subunits to form the 70S ribosome, for tRNA binding and peptide bond formation. It has been suggested to have peptidyltransferase activity; this is somewhat controversial. Makes several contacts with the 16S rRNA in the 70S ribosome. The chain is Large ribosomal subunit protein uL2 from Cyanothece sp. (strain PCC 7425 / ATCC 29141).